The sequence spans 303 residues: N-acetyl-D-glucosamine kinase (303 aa).

ATP is bound by residues 4 to 11 (GFDIGGTK) and 133 to 140 (GVGGGLIF). The Zn(2+) site is built by His-157, Cys-177, Cys-179, and Cys-184.

Belongs to the ROK (NagC/XylR) family. NagK subfamily.

The catalysed reaction is N-acetyl-D-glucosamine + ATP = N-acetyl-D-glucosamine 6-phosphate + ADP + H(+). The protein operates within cell wall biogenesis; peptidoglycan recycling. Functionally, catalyzes the phosphorylation of N-acetyl-D-glucosamine (GlcNAc) derived from cell-wall degradation, yielding GlcNAc-6-P. The sequence is that of N-acetyl-D-glucosamine kinase from Escherichia coli O127:H6 (strain E2348/69 / EPEC).